Consider the following 600-residue polypeptide: Elongation factor 4 (600 aa).

A tr-type G domain is found at 4-186 (SKIRNFSIIA…EIVKKIPAPQ (183 aa)). Residues 16–21 (DHGKST) and 133–136 (NKID) each bind GTP.

This sequence belongs to the TRAFAC class translation factor GTPase superfamily. Classic translation factor GTPase family. LepA subfamily.

The protein resides in the cell inner membrane. The catalysed reaction is GTP + H2O = GDP + phosphate + H(+). In terms of biological role, required for accurate and efficient protein synthesis under certain stress conditions. May act as a fidelity factor of the translation reaction, by catalyzing a one-codon backward translocation of tRNAs on improperly translocated ribosomes. Back-translocation proceeds from a post-translocation (POST) complex to a pre-translocation (PRE) complex, thus giving elongation factor G a second chance to translocate the tRNAs correctly. Binds to ribosomes in a GTP-dependent manner. In Trichlorobacter lovleyi (strain ATCC BAA-1151 / DSM 17278 / SZ) (Geobacter lovleyi), this protein is Elongation factor 4.